A 274-amino-acid chain; its full sequence is Glutamate racemase (274 aa).

Substrate is bound by residues 9 to 10 (DS) and 41 to 42 (YG). Residue cysteine 72 is the Proton donor/acceptor of the active site. 73–74 (NT) provides a ligand contact to substrate. Cysteine 184 functions as the Proton donor/acceptor in the catalytic mechanism. 185 to 186 (TH) is a substrate binding site.

It belongs to the aspartate/glutamate racemases family.

The catalysed reaction is L-glutamate = D-glutamate. The protein operates within cell wall biogenesis; peptidoglycan biosynthesis. Its function is as follows. Provides the (R)-glutamate required for cell wall biosynthesis. This chain is Glutamate racemase, found in Oceanobacillus iheyensis (strain DSM 14371 / CIP 107618 / JCM 11309 / KCTC 3954 / HTE831).